A 462-amino-acid polypeptide reads, in one-letter code: Citrate synthase, mitochondrial (462 aa).

A mitochondrion-targeting transit peptide spans 1-21 (MRSINQLLKQASLSQKSQYNF). Catalysis depends on residues His-300, His-346, and Asp-401.

The protein belongs to the citrate synthase family. Homodimer.

Its subcellular location is the mitochondrion matrix. It localises to the cytoplasm. The protein localises to the cytoskeleton. The enzyme catalyses oxaloacetate + acetyl-CoA + H2O = citrate + CoA + H(+). It functions in the pathway carbohydrate metabolism; tricarboxylic acid cycle; isocitrate from oxaloacetate: step 1/2. Structural protein involved in oral morphogenesis and in pronuclear behavior during conjugation. Respiratory enzyme. In Tetrahymena thermophila, this protein is Citrate synthase, mitochondrial.